The chain runs to 202 residues: ATP-dependent Clp protease proteolytic subunit (202 aa).

The active-site Nucleophile is the Ser101. Residue His126 is part of the active site.

The protein belongs to the peptidase S14 family. Component of the chloroplastic Clp protease core complex.

Its subcellular location is the plastid. The protein localises to the chloroplast stroma. It carries out the reaction Hydrolysis of proteins to small peptides in the presence of ATP and magnesium. alpha-casein is the usual test substrate. In the absence of ATP, only oligopeptides shorter than five residues are hydrolyzed (such as succinyl-Leu-Tyr-|-NHMec, and Leu-Tyr-Leu-|-Tyr-Trp, in which cleavage of the -Tyr-|-Leu- and -Tyr-|-Trp bonds also occurs).. Functionally, cleaves peptides in various proteins in a process that requires ATP hydrolysis. Has a chymotrypsin-like activity. Plays a major role in the degradation of misfolded proteins. The chain is ATP-dependent Clp protease proteolytic subunit from Nuphar advena (Common spatterdock).